A 620-amino-acid chain; its full sequence is Probable potassium transport system protein Kup (620 aa).

Helical transmembrane passes span 11–31 (LAFLAMGIVYGDIGTSPLYAF), 51–71 (ILSLVFWAFVLIVSIKYLLLV), 100–120 (IAMLLGILATGFFFGEAVITP), 138–158 (LAPYVLPIAMMIIVALFAVQA), 167–187 (FFAPVMLLWFLVLALLGAHAI), 202–222 (AVHFVLLHGQHTLFILGLVVL), 246–266 (WFALVMPSLLLNYFGQGAYLL), 288–308 (LILLATFATVIASQAVISGIF), 334–354 (GQIYVPAANMLLFVAVIFVML), 364–384 (AAYGIAVTAIMMISSLLLVLV), 396–416 (VVTIGIAFIGMDTLLLASTST), and 418–438 (LMEGGWLPLLLGCVVFIVMYI).

It belongs to the HAK/KUP transporter (TC 2.A.72) family.

The protein resides in the cell inner membrane. It carries out the reaction K(+)(in) + H(+)(in) = K(+)(out) + H(+)(out). Transport of potassium into the cell. Likely operates as a K(+):H(+) symporter. The polypeptide is Probable potassium transport system protein Kup (Vibrio cholerae serotype O1 (strain ATCC 39541 / Classical Ogawa 395 / O395)).